The following is a 103-amino-acid chain: Large ribosomal subunit protein bL21 (103 aa).

This sequence belongs to the bacterial ribosomal protein bL21 family. Part of the 50S ribosomal subunit. Contacts protein L20.

In terms of biological role, this protein binds to 23S rRNA in the presence of protein L20. This is Large ribosomal subunit protein bL21 from Clostridium perfringens (strain ATCC 13124 / DSM 756 / JCM 1290 / NCIMB 6125 / NCTC 8237 / Type A).